The primary structure comprises 304 residues: Non-specific ribonucleoside hydrolase RihC (304 aa).

Residue histidine 233 is part of the active site.

Belongs to the IUNH family. RihC subfamily.

Its function is as follows. Hydrolyzes both purine and pyrimidine ribonucleosides with a broad-substrate specificity. This Escherichia coli O17:K52:H18 (strain UMN026 / ExPEC) protein is Non-specific ribonucleoside hydrolase RihC.